The chain runs to 430 residues: Adenylosuccinate synthetase (430 aa).

GTP contacts are provided by residues G12 to K18 and G40 to T42. D13 functions as the Proton acceptor in the catalytic mechanism. The Mg(2+) site is built by D13 and G40. IMP-binding positions include D13–K16, N38–H41, T130, R144, Q224, T239, and R303. H41 serves as the catalytic Proton donor. Residue T299–R305 coordinates substrate. GTP is bound by residues R305, K331–D333, and S413–S415.

It belongs to the adenylosuccinate synthetase family. As to quaternary structure, homodimer. Requires Mg(2+) as cofactor.

The protein resides in the cytoplasm. It catalyses the reaction IMP + L-aspartate + GTP = N(6)-(1,2-dicarboxyethyl)-AMP + GDP + phosphate + 2 H(+). The protein operates within purine metabolism; AMP biosynthesis via de novo pathway; AMP from IMP: step 1/2. Its function is as follows. Plays an important role in the de novo pathway of purine nucleotide biosynthesis. Catalyzes the first committed step in the biosynthesis of AMP from IMP. The chain is Adenylosuccinate synthetase from Rhodopseudomonas palustris (strain BisB5).